The following is a 480-amino-acid chain: 3,6-anhydro-alpha-L-galactose dehydrogenase (480 aa).

NADP(+)-binding positions include 149–150, 173–176, and 226–227; these read WN, KPTS, and GS. The active-site Proton acceptor is the Glu248. Position 249 (Leu249) interacts with NADP(+). Cys282 acts as the Nucleophile in catalysis. Residue Glu383 coordinates NADP(+).

This sequence belongs to the aldehyde dehydrogenase family.

It catalyses the reaction 3,6-anhydro-alpha-L-galactopyranose + NADP(+) + H2O = 3,6-anhydro-L-galactonate + NADPH + 2 H(+). The catalysed reaction is 3,6-anhydro-alpha-L-galactopyranose + NAD(+) + H2O = 3,6-anhydro-L-galactonate + NADH + 2 H(+). Functionally, involved in the degradation of 3,6-anhydro-L-galactose, which is the major monomeric sugar of red macroalgae. Catalyzes the oxidation of 3,6-anhydro-L-galactose (AHG) to form 3,6-anhydrogalactonate (AHGA). This Vibrio sp. (strain EJY3) protein is 3,6-anhydro-alpha-L-galactose dehydrogenase.